The following is a 277-amino-acid chain: Shikimate dehydrogenase (NADP(+)) (277 aa).

Shikimate contacts are provided by residues 15-17 (SLS) and Thr-62. Lys-66 (proton acceptor) is an active-site residue. Residues Asn-87 and Asp-102 each coordinate shikimate. NADP(+)-binding positions include 127–131 (GAGGA), 151–156 (NRTVDK), and Ile-219. Tyr-221 lines the shikimate pocket. NADP(+) is bound at residue Gly-242.

This sequence belongs to the shikimate dehydrogenase family. In terms of assembly, homodimer.

The enzyme catalyses shikimate + NADP(+) = 3-dehydroshikimate + NADPH + H(+). It participates in metabolic intermediate biosynthesis; chorismate biosynthesis; chorismate from D-erythrose 4-phosphate and phosphoenolpyruvate: step 4/7. Its function is as follows. Involved in the biosynthesis of the chorismate, which leads to the biosynthesis of aromatic amino acids. Catalyzes the reversible NADPH linked reduction of 3-dehydroshikimate (DHSA) to yield shikimate (SA). This is Shikimate dehydrogenase (NADP(+)) from Bacillus cereus (strain AH820).